The sequence spans 64 residues: UPF0434 protein TERTU_2813 (64 aa).

Belongs to the UPF0434 family.

This chain is UPF0434 protein TERTU_2813, found in Teredinibacter turnerae (strain ATCC 39867 / T7901).